Here is a 433-residue protein sequence, read N- to C-terminus: tRNA-2-methylthio-N(6)-dimethylallyladenosine synthase (433 aa).

One can recognise an MTTase N-terminal domain in the interval 4 to 119 (KKLFIQTLGC…ITQAIKTPKF (116 aa)). [4Fe-4S] cluster-binding residues include Cys13, Cys50, Cys82, Cys151, Cys155, and Cys158. Positions 137–370 (RNSIYKSYIN…QNRHSEILDE (234 aa)) constitute a Radical SAM core domain. Residues 373–433 (KKQENKTFKV…KRMVLYGEII (61 aa)) form the TRAM domain.

The protein belongs to the methylthiotransferase family. MiaB subfamily. In terms of assembly, monomer. It depends on [4Fe-4S] cluster as a cofactor.

Its subcellular location is the cytoplasm. The catalysed reaction is N(6)-dimethylallyladenosine(37) in tRNA + (sulfur carrier)-SH + AH2 + 2 S-adenosyl-L-methionine = 2-methylsulfanyl-N(6)-dimethylallyladenosine(37) in tRNA + (sulfur carrier)-H + 5'-deoxyadenosine + L-methionine + A + S-adenosyl-L-homocysteine + 2 H(+). Functionally, catalyzes the methylthiolation of N6-(dimethylallyl)adenosine (i(6)A), leading to the formation of 2-methylthio-N6-(dimethylallyl)adenosine (ms(2)i(6)A) at position 37 in tRNAs that read codons beginning with uridine. This is tRNA-2-methylthio-N(6)-dimethylallyladenosine synthase from Campylobacter jejuni subsp. doylei (strain ATCC BAA-1458 / RM4099 / 269.97).